We begin with the raw amino-acid sequence, 305 residues long: GTPase Era (305 aa).

One can recognise an Era-type G domain in the interval 13-181; sequence RCGFVAIVGR…ESAVGRFLPE (169 aa). The tract at residues 21–28 is G1; that stretch reads GRPNVGKS. 21-28 provides a ligand contact to GTP; sequence GRPNVGKS. Positions 47–51 are G2; that stretch reads QTTRH. The segment at 68-71 is G3; the sequence is DTPG. GTP is bound by residues 68 to 72 and 130 to 133; these read DTPGM and NKVD. The segment at 130–133 is G4; sequence NKVD. A G5 region spans residues 160-162; it reads LSA. A KH type-2 domain is found at 204-288; that stretch reads VREKITRQLG…MLRLWVKVKR (85 aa).

This sequence belongs to the TRAFAC class TrmE-Era-EngA-EngB-Septin-like GTPase superfamily. Era GTPase family. Monomer.

The protein resides in the cytoplasm. It localises to the cell inner membrane. In terms of biological role, an essential GTPase that binds both GDP and GTP, with rapid nucleotide exchange. Plays a role in 16S rRNA processing and 30S ribosomal subunit biogenesis and possibly also in cell cycle regulation and energy metabolism. This is GTPase Era from Marinobacter nauticus (strain ATCC 700491 / DSM 11845 / VT8) (Marinobacter aquaeolei).